We begin with the raw amino-acid sequence, 808 residues long: Protein SEY1 (808 aa).

The tract at residues 1–21 (MSSELSEGELSHTSSSSSFVP) is disordered. At 1-701 (MSSELSEGEL…KRSIVQHITQ (701 aa)) the chain is on the cytoplasmic side. The GB1/RHD3-type G domain maps to 57 to 286 (GNNYHIISVF…VGDELFKPEY (230 aa)). Residue 67–74 (GSQSTGKS) participates in GTP binding. The chain crosses the membrane as a helical span at residues 702 to 722 (IPYYIYLVIVFLGWNEFMAII). Over 723-725 (RNP) the chain is Lumenal. A helical membrane pass occupies residues 726–746 (LLFSLALLLGASVYILYKLNL). Over 747–808 (LKPAIVVAQR…YSDNIELDDM (62 aa)) the chain is Cytoplasmic.

The protein belongs to the TRAFAC class dynamin-like GTPase superfamily. GB1/RHD3 GTPase family. RHD3 subfamily.

Its subcellular location is the endoplasmic reticulum membrane. Cooperates with the reticulon proteins and tubule-shaping DP1 family proteins to generate and maintain the structure of the tubular endoplasmic reticulum network. Has GTPase activity, which is required for its function in ER organization. The polypeptide is Protein SEY1 (Candida tropicalis (strain ATCC MYA-3404 / T1) (Yeast)).